The following is a 130-amino-acid chain: uncharacterized protein (130 aa).

This is an uncharacterized protein from Escherichia coli (strain K12).